A 727-amino-acid polypeptide reads, in one-letter code: 1,4-alpha-glucan branching enzyme GlgB (727 aa).

Catalysis depends on Asp-411, which acts as the Nucleophile. Glu-464 acts as the Proton donor in catalysis.

It belongs to the glycosyl hydrolase 13 family. GlgB subfamily. Monomer.

The catalysed reaction is Transfers a segment of a (1-&gt;4)-alpha-D-glucan chain to a primary hydroxy group in a similar glucan chain.. Its pathway is glycan biosynthesis; glycogen biosynthesis. Its function is as follows. Catalyzes the formation of the alpha-1,6-glucosidic linkages in glycogen by scission of a 1,4-alpha-linked oligosaccharide from growing alpha-1,4-glucan chains and the subsequent attachment of the oligosaccharide to the alpha-1,6 position. This chain is 1,4-alpha-glucan branching enzyme GlgB, found in Protochlamydia amoebophila (strain UWE25).